The following is a 555-amino-acid chain: Glutamate--tRNA ligase (555 aa).

A 'HIGH' region motif is present at residues 103–113; sequence PNPSGPLHIGH.

This sequence belongs to the class-I aminoacyl-tRNA synthetase family. Glutamate--tRNA ligase type 2 subfamily.

It is found in the cytoplasm. The enzyme catalyses tRNA(Glu) + L-glutamate + ATP = L-glutamyl-tRNA(Glu) + AMP + diphosphate. Functionally, catalyzes the attachment of glutamate to tRNA(Glu) in a two-step reaction: glutamate is first activated by ATP to form Glu-AMP and then transferred to the acceptor end of tRNA(Glu). This chain is Glutamate--tRNA ligase, found in Methanobrevibacter smithii (strain ATCC 35061 / DSM 861 / OCM 144 / PS).